The chain runs to 96 residues: uncharacterized protein (96 aa).

Residues 9-86 are a coiled coil; that stretch reads EELKSQAQVY…NKYADTVAER (78 aa).

Belongs to the WXG100 family. sagEsxA-like subfamily.

This is an uncharacterized protein from Clostridium acetobutylicum (strain ATCC 824 / DSM 792 / JCM 1419 / IAM 19013 / LMG 5710 / NBRC 13948 / NRRL B-527 / VKM B-1787 / 2291 / W).